The following is a 353-amino-acid chain: Endophilin-A3 (353 aa).

The membrane-binding amphipathic helix stretch occupies residues 1-21; that stretch reads MSVAGLKKQFHKASQLFSEKI. The region spanning 18-249 is the BAR domain; that stretch reads SEKISGAEGT…LQNRINVASS (232 aa). The required for dimerization upon membrane association stretch occupies residues 60 to 87; the sequence is PNPAYRAKLGMLNTMSKIRGQVKTTGYP. Residues 180-201 are a coiled coil; it reads DEEVKQAVEKFEESKELAERSM. An interaction with ARC region spans residues 218 to 254; the sequence is FVEAALDYHKQSTEILEDLQSKLQNRINVASSRPKRE. In terms of domain architecture, SH3 spans 291–350; it reads VDQPCCQALYDFEPENEGELGFKEGDIITLTNQIDENWYEGMLNGESGFFPHNYVEVMVP.

This sequence belongs to the endophilin family. In terms of assembly, interacts with ARC. Interacts with SYNJ1 and DNM1. Highest level in a region associated with endocytosis of yolk proteins in developing oocytes (at protein level). Highest level in small ovarian follicles. High levels in brain and testis. Lower level in adrenal glands.

It is found in the cytoplasm. The protein localises to the early endosome membrane. Functionally, implicated in endocytosis. May recruit other proteins to membranes with high curvature. Implicated in endocytosis of yolk proteins during oogenesis. The protein is Endophilin-A3 of Gallus gallus (Chicken).